Consider the following 87-residue polypeptide: Large ribosomal subunit protein bL31B (87 aa).

This sequence belongs to the bacterial ribosomal protein bL31 family. Type B subfamily. As to quaternary structure, part of the 50S ribosomal subunit.

This chain is Large ribosomal subunit protein bL31B, found in Staphylococcus carnosus (strain TM300).